We begin with the raw amino-acid sequence, 294 residues long: S-adenosylmethionine uptake transporter (294 aa).

Helical transmembrane passes span 8-28 (YLTG…NDVI), 41-61 (VAFF…VYYG), 74-91 (ILRG…TYGL), 98-118 (TATV…VFFL), 121-141 (NIIW…VVTL), 148-168 (FNPE…LDII), 177-197 (SMIS…LPVA), 207-227 (FELA…FFLL), 237-257 (ATAP…YFIF), and 260-280 (FPDK…LFII). EamA domains lie at 21–141 (SSSA…VVTL) and 160–280 (ISFA…LFII).

Belongs to the drug/metabolite transporter (DMT) superfamily. 10 TMS drug/metabolite exporter (DME) (TC 2.A.7.3) family.

The protein resides in the cell inner membrane. In terms of biological role, transports S-adenosylmethionine. The chain is S-adenosylmethionine uptake transporter (sam) from Rickettsia conorii (strain ATCC VR-613 / Malish 7).